A 984-amino-acid chain; its full sequence is Probable beta-galactosidase C (984 aa).

The first 23 residues, 1 to 23 (MRLLSFIYLVWLALLTGTPQVSA), serve as a signal peptide directing secretion. Substrate contacts are provided by Tyr82, Asn127, Ala128, Glu129, and Asn187. Catalysis depends on Glu188, which acts as the Proton donor. An N-linked (GlcNAc...) asparagine glycan is attached at Asn197. Tyr251 is a substrate binding site. Residues Cys257 and Cys304 are joined by a disulfide bond. An N-linked (GlcNAc...) asparagine glycan is attached at Asn276. Glu287 serves as the catalytic Nucleophile. Tyr353 is a substrate binding site. Asn391, Asn421, Asn434, Asn517, Asn602, Asn677, Asn715, Asn720, Asn759, and Asn805 each carry an N-linked (GlcNAc...) asparagine glycan.

It belongs to the glycosyl hydrolase 35 family.

The protein resides in the secreted. It catalyses the reaction Hydrolysis of terminal non-reducing beta-D-galactose residues in beta-D-galactosides.. Cleaves beta-linked terminal galactosyl residues from gangliosides, glycoproteins, and glycosaminoglycans. In Aspergillus oryzae (strain ATCC 42149 / RIB 40) (Yellow koji mold), this protein is Probable beta-galactosidase C (lacC).